The chain runs to 314 residues: PDZ domain-containing protein GIPC2 (314 aa).

The segment covering 1-12 (MPLGLRGKKKAA) has biased composition (basic residues). Positions 1–36 (MPLGLRGKKKAAKSKEAARLVEGERSSGSQGVPGPP) are disordered. The span at 13–25 (KSKEAARLVEGER) shows a compositional bias: basic and acidic residues. Residues 117–197 (EVNVYKSEDS…EELFTLQLIE (81 aa)) enclose the PDZ domain.

Belongs to the GIPC family. In terms of assembly, probably interacts with SEMA5A. In terms of tissue distribution, expressed in kidney and lung (at protein level).

It localises to the cytoplasm. The polypeptide is PDZ domain-containing protein GIPC2 (Gipc2) (Mus musculus (Mouse)).